A 199-amino-acid polypeptide reads, in one-letter code: Urease accessory protein UreG (199 aa).

GTP is bound at residue 8–15 (GPVGSGKT).

It belongs to the SIMIBI class G3E GTPase family. UreG subfamily. As to quaternary structure, homodimer. UreH, UreF and UreG form a complex that acts as a GTP-hydrolysis-dependent molecular chaperone, activating the urease apoprotein by helping to assemble the nickel containing metallocenter of UreC. The UreE protein probably delivers the nickel.

It is found in the cytoplasm. Facilitates the functional incorporation of the urease nickel metallocenter. This process requires GTP hydrolysis, probably effectuated by UreG. In Helicobacter pylori (strain J99 / ATCC 700824) (Campylobacter pylori J99), this protein is Urease accessory protein UreG.